The primary structure comprises 570 residues: Fibropellin-3 (570 aa).

An N-terminal signal peptide occupies residues 1-17 (MKVSLLAVLLLSIVAAT). One can recognise an EGF-like 1 domain in the interval 18–55 (YGQGECGSNPCENGSVCRDGEGTYICECQMGYDGQNCD). Cystine bridges form between C23/C34, C28/C43, C45/C54, and C62/C88. N30 carries N-linked (GlcNAc...) asparagine glycosylation. The CUB domain occupies 62–175 (CGYNIFESTG…RKGFRITFSS (114 aa)). Residue N136 is glycosylated (N-linked (GlcNAc...) asparagine). One can recognise an EGF-like 2; calcium-binding domain in the interval 176 to 212 (DGDDCTPNPCLNGATCVDQVNDYQCICAPGFTGDNCE). Disulfide bonds link C180–C191, C185–C200, C202–C211, C218–C229, C223–C238, C240–C249, C256–C267, C261–C276, C278–C287, C294–C305, C299–C314, C316–C325, C332–C343, C337–C352, C354–C363, C370–C381, C375–C390, C392–C401, C408–C419, C413–C428, C430–C439, and C445–C521. The EGF-like 3; calcium-binding domain occupies 214–250 (DIDECASAPCRNGGACVDQVNGYTCNCIPGFNGVNCE). One can recognise an EGF-like 4; calcium-binding domain in the interval 252 to 288 (NINECASIPCLNGGICVDGINQFACTCLPGYTGILCE). An EGF-like 5; calcium-binding domain is found at 290–326 (DINECASSPCQNGGSCTDAVNRYTCDCRAGFTGSNCE). The 37-residue stretch at 328–364 (NINECASSPCLNGGSCLDGVDGYVCQCLPNYTGTHCE) folds into the EGF-like 6; calcium-binding domain. N357 is a glycosylation site (N-linked (GlcNAc...) asparagine). Residues 366–402 (SLDACASLPCQNGGVCTNVGGDYVCECLPGYTGINCE) form the EGF-like 7 domain. An EGF-like 8; calcium-binding domain is found at 404 to 440 (DINECASLPCQNGGECINGIAMYICQCRQGYAGVNCE). The region spanning 443 to 562 (GFCDLEGVWF…GQDKWTRYEQ (120 aa)) is the Avidin-like domain.

In terms of assembly, homotetramer.

It is found in the secreted. The protein localises to the extracellular space. Its function is as follows. Forms the apical lamina, a component of the extracellular matrix. The sequence is that of Fibropellin-3 (EGF3) from Strongylocentrotus purpuratus (Purple sea urchin).